The chain runs to 355 residues: Fructose-1,6-bisphosphatase class 1 (355 aa).

Mg(2+)-binding residues include Glu94, Asp116, Leu118, and Asp119. Residues 119–122 (DGSS), Asn211, and 263–265 (YLY) each bind substrate. Glu283 is a Mg(2+) binding site.

This sequence belongs to the FBPase class 1 family. In terms of assembly, homotetramer. The cofactor is Mg(2+).

Its subcellular location is the cytoplasm. The enzyme catalyses beta-D-fructose 1,6-bisphosphate + H2O = beta-D-fructose 6-phosphate + phosphate. The protein operates within carbohydrate biosynthesis; Calvin cycle. The chain is Fructose-1,6-bisphosphatase class 1 from Rhodospirillum rubrum (strain ATCC 11170 / ATH 1.1.1 / DSM 467 / LMG 4362 / NCIMB 8255 / S1).